Consider the following 838-residue polypeptide: Ribonuclease Z (838 aa).

Serine 824 bears the Phosphoserine mark.

This sequence belongs to the RNase Z family. In terms of assembly, homodimer. Zn(2+) serves as cofactor.

Its subcellular location is the cytoplasm. The protein resides in the nucleus. The enzyme catalyses Endonucleolytic cleavage of RNA, removing extra 3' nucleotides from tRNA precursor, generating 3' termini of tRNAs. A 3'-hydroxy group is left at the tRNA terminus and a 5'-phosphoryl group is left at the trailer molecule.. Zinc phosphodiesterase, which displays some tRNA 3'-processing endonuclease activity. Probably involved in tRNA maturation, by removing a 3'-trailer from precursor tRNA. The protein is Ribonuclease Z (TRZ1) of Saccharomyces cerevisiae (strain ATCC 204508 / S288c) (Baker's yeast).